A 175-amino-acid polypeptide reads, in one-letter code: Ribosome maturation factor RimM (175 aa).

One can recognise a PRC barrel domain in the interval 100 to 173; that stretch reads EGEYYFHEII…TIIIRPMEGL (74 aa).

The protein belongs to the RimM family. As to quaternary structure, binds ribosomal protein uS19.

It localises to the cytoplasm. In terms of biological role, an accessory protein needed during the final step in the assembly of 30S ribosomal subunit, possibly for assembly of the head region. Essential for efficient processing of 16S rRNA. May be needed both before and after RbfA during the maturation of 16S rRNA. It has affinity for free ribosomal 30S subunits but not for 70S ribosomes. This is Ribosome maturation factor RimM from Geobacillus kaustophilus (strain HTA426).